The following is a 349-amino-acid chain: tRNA pseudouridine synthase D (349 aa).

Residue Phe27 coordinates substrate. Residue Asp80 is the Nucleophile of the active site. Asn129 is a binding site for substrate. The TRUD domain maps to 155–303 (GVPNYFGAQR…VEAARRAMLL (149 aa)). Phe329 provides a ligand contact to substrate.

This sequence belongs to the pseudouridine synthase TruD family.

The catalysed reaction is uridine(13) in tRNA = pseudouridine(13) in tRNA. Responsible for synthesis of pseudouridine from uracil-13 in transfer RNAs. This is tRNA pseudouridine synthase D from Klebsiella pneumoniae subsp. pneumoniae (strain ATCC 700721 / MGH 78578).